Reading from the N-terminus, the 395-residue chain is Dual specificity protein phosphatase 4 (395 aa).

Valine 2 is subject to N-acetylvaline. The 119-residue stretch at 42–160 (SGGKCLLLDC…FSSEYPEFCS (119 aa)) folds into the Rhodanese domain. The 142-residue stretch at 196-337 (GPVEILPFLY…LLQFESQVLT (142 aa)) folds into the Tyrosine-protein phosphatase domain. Cysteine 281 (phosphocysteine intermediate) is an active-site residue. A phosphoserine; by MAPK mark is found at serine 387 and serine 392.

This sequence belongs to the protein-tyrosine phosphatase family. Non-receptor class dual specificity subfamily. As to quaternary structure, hollow spherical complex composed of 24 subunits with pseudooctahedral symmetry, has a tetramer as the basic unit. Phosphorylation in the C-terminus by ERK1/2 inhibits proteasomal degradation and stabilizes the protein. In terms of tissue distribution, expressed at moderate levels in nearly all tissues and cells including brain, spleen, and testes with the higher expression in the heart and lung and lower expression in skeletal muscle and kidney. Undetectable in liver. Expressed in many areas of the brain with very strong expression in the hippocampus, piriform cortex, and the suprachiasmatic nucleus.

It localises to the nucleus. It carries out the reaction O-phospho-L-tyrosyl-[protein] + H2O = L-tyrosyl-[protein] + phosphate. It catalyses the reaction O-phospho-L-seryl-[protein] + H2O = L-seryl-[protein] + phosphate. The enzyme catalyses O-phospho-L-threonyl-[protein] + H2O = L-threonyl-[protein] + phosphate. Functionally, regulates mitogenic signal transduction by dephosphorylating both Thr and Tyr residues on MAP kinases ERK1 and ERK2. This chain is Dual specificity protein phosphatase 4 (Dusp4), found in Rattus norvegicus (Rat).